Consider the following 435-residue polypeptide: Eukaryotic peptide chain release factor subunit 1-3 (435 aa).

Ala2 carries the N-acetylalanine modification.

Belongs to the eukaryotic release factor 1 family. Heterodimer of two subunits, one of which binds GTP.

Its subcellular location is the cytoplasm. In terms of biological role, directs the termination of nascent peptide synthesis (translation) in response to the termination codons UAA, UAG and UGA. Modulates plant growth and development. The sequence is that of Eukaryotic peptide chain release factor subunit 1-3 from Brassica oleracea var. botrytis (Cauliflower).